The primary structure comprises 422 residues: Tryptophan synthase beta chain (422 aa).

An N6-(pyridoxal phosphate)lysine modification is found at Lys111.

The protein belongs to the TrpB family. As to quaternary structure, tetramer of two alpha and two beta chains. It depends on pyridoxal 5'-phosphate as a cofactor.

It carries out the reaction (1S,2R)-1-C-(indol-3-yl)glycerol 3-phosphate + L-serine = D-glyceraldehyde 3-phosphate + L-tryptophan + H2O. It participates in amino-acid biosynthesis; L-tryptophan biosynthesis; L-tryptophan from chorismate: step 5/5. In terms of biological role, the beta subunit is responsible for the synthesis of L-tryptophan from indole and L-serine. This chain is Tryptophan synthase beta chain, found in Pseudothermotoga lettingae (strain ATCC BAA-301 / DSM 14385 / NBRC 107922 / TMO) (Thermotoga lettingae).